Here is a 2055-residue protein sequence, read N- to C-terminus: MGCTTSVILFKGIRTVFERNCAYMCKQPGESNALEYTAYNWSKEDSELSIAFCLAKPKLIEPLDYENVIVQKKTQILNDCLREMLLFPYDDFQTAILRRQGRYLRSTVPANAEEEAQSLFVTECIKTYNSDWHLVTYKYEDYSGEFRQLPNKVPKLDKLPVHVYEVDEEADKDEDAASLGSQKGGITKHGWLYKGNMNSAISVTMRSFKRRFFHLIQLGDGSYNLNFYKDEKISKEPKGSIFLDSCMGVIQNNRVRRFAFELKMQDKSSYLLAADSEAEMEEWVTVLNKILQLNFEAAMQEKRNGDPHEDDEQSKLEGSGSGLDSYLPELAKSTREAEIKLKSESRVKLFYLDPDTQKLDFSSAEPEVKPFEEKFGKRILVKCNDLSFNLQCCVAENEEGPTTNVEPFFVTLSLFDIKYNRKISADFHVDLNHFSVRQMLAPTSPALMNGGQSPPAFQDALHTAMQYPKQGIFSVTCPHPDIFLVARIEKVLQGSITHCAEPYMRSSDSSKVAQKVLKNAKQACQRLGQYRMPFAWAARTLFKDTSGNLDKNARFSAIYRQDSNKLSNDDMLKLLADFRKPEKMAKLPVILGNLDITIDSVSCDFPNYLNSSYIPMRQFETCSKSPITFEVEEFVPCIPKHTQPYTVYSNHLYVYPKYLKYDSQKSFAKARNIAICIEFKDSDEEDSQPLKCIYGRPGGPVFTRSALAAVLHHQQNPEFYDEIKIELPAQLHERHHLLFTFFHVSCDNSTKGSTKKKDAVETQVGFSWLPLLKDGRVLTSEQHIPVSANLPSGYLGYQELGMGRHYGPEVKWVEGGKPLLKISTHLVSTVYTQDQHLHNFFQYCQKTESGAQASGSELVKYLKSLHAMEGHVMIAFLPTILNQLFRVLTRATQEEVAVNVTRVIIHVVAQCHEEGLESHLRSYVKFAYKAEPYVASEYKTVHEELTKSMTTILKPSADFLTSNKLLKYSWFFFDVLIKSMAQHLIENNKVKLLRNQRFPASYHHAVETVVNMLMPHITQKFRDNPEASKNANHSLAVFIKRCFTFMDRGFVFKQINNYISCFAPGDPKTLFEYKFEFLRVVCNHEHYIPLNLPMPFGKGRIQRYQDLQLDYSLTDEFCRNHFLVGLLLREVGTALQEFREVRVIAISMLKNLLIKHSFDDRYNSRSHQARIATLYLPLFGLLIENVQRINVRDVSPFPVNPGSIVKDEALAVPAGNPLMTPQKGNTLDHSLHKDLLGAISGIASPYTASTPNINSVRNADSRGSLISTDSGNSLPDRNPEKSNSLDKQQQSGMLGNSVVRCDKLDQSEIKSLLMCFLYVLKSMSDDALFTYWNKASTAELMDFFTISEVCLHQFQYMGKRYIARTGMMHARLQQLGSLDNSVTFNHSYGHSEADVVHQSLLEANIATEVCLTALDTLSLFTLAFKNQLLADHGHNPLMKKVFDVYLCFLQKHQSEMALKNVFTALRSLIYKFPSAFYEGRADMCASLCYEVLKCCNSKLSSIRTEASQLLYFLMRNNFDYTGKKSFVRTHLQVIISVSQLIADVVGIGGTRFQQSLSIINNCANSDRIIKHTSFSSDVKDLTKRIRTVLMATAQMKEHENDPEMLVDLQYSLAKSYASTPELRKTWLDSMARIHVKNGDLSEAAMCYVHVTALVAEYLTRKGMFRQGCTAFRVITPNIDEEASMMEDVGMQDVHFNEDVLMELLEQCADGLWKAERYELIADIYKLIIPIYEKRRDFERLAHLYDTLHRAYSKVTEVMHSGRRLLGTYFRVAFFGQAAQYQFTDSETDVEGFFEDEDGKEYIYKEPKLTPLSEISQRLLKLYSDKFGSENVKMIQDSGKVNPKDLDSKFAYIQVTHVTPFFDEKELQERRTEFERCHNIRRFMFEMPFTQTGKRQGGVEEQCKRRTILTAIHCFPYVKKRIPVMYQHHTDLNPIEVAIDEMSKKVAELRQLCSSAEVDMIKLQLKLQGSVSVQVNAGPLAYARAFLDDTNTKRYPDNKVKLLKEVFRQFVEACGQALAVNERLIKEDQLEYQEEMKANYREMAKELSDIMREQMG.

Residues S178 and S181 each carry the phosphoserine modification. The region spanning 185–292 is the PH domain; sequence GITKHGWLYK…WVTVLNKILQ (108 aa). The interval 301 to 326 is disordered; the sequence is EKRNGDPHEDDEQSKLEGSGSGLDSY. Phosphoserine is present on residues S444 and S453. In terms of domain architecture, C2 DOCK-type spans 649-827; the sequence is SNHLYVYPKY…PLLKISTHLV (179 aa). S936 and S1244 each carry phosphoserine. T1250 carries the phosphothreonine modification. Residues 1253 to 1291 are disordered; sequence INSVRNADSRGSLISTDSGNSLPDRNPEKSNSLDKQQQS. S1264, S1270, and S1273 each carry phosphoserine. Positions 1264 to 1276 are enriched in polar residues; sequence SLISTDSGNSLPD. In terms of domain architecture, DOCKER spans 1614-2055; sequence KSYASTPELR…LSDIMREQMG (442 aa). An interaction with CDC42 region spans residues 1679 to 2055; that stretch reads DEEASMMEDV…LSDIMREQMG (377 aa).

The protein belongs to the DOCK family. In terms of assembly, homodimer. Interacts preferentially with nucleotide-depleted CDC42. As to expression, expressed in lung. Also detected in Peyers patches, thymus, brain and lymph nodes. Expressed in Purkinje cells.

It localises to the endomembrane system. Guanine nucleotide-exchange factor (GEF) that activates CDC42 by exchanging bound GDP for free GTP. Overexpression induces filopodia formation. This Mus musculus (Mouse) protein is Dedicator of cytokinesis protein 9.